The sequence spans 494 residues: 3-octaprenyl-4-hydroxybenzoate carboxy-lyase (494 aa).

Mn(2+) is bound at residue Asn-172. Prenylated FMN contacts are provided by residues Ile-175 to Arg-177, Arg-189 to Leu-191, and Arg-194 to Gly-195. Glu-238 provides a ligand contact to Mn(2+). Asp-287 functions as the Proton donor in the catalytic mechanism.

The protein belongs to the UbiD family. In terms of assembly, homohexamer. It depends on prenylated FMN as a cofactor. Requires Mn(2+) as cofactor.

Its subcellular location is the cell membrane. It catalyses the reaction a 4-hydroxy-3-(all-trans-polyprenyl)benzoate + H(+) = a 2-(all-trans-polyprenyl)phenol + CO2. Its pathway is cofactor biosynthesis; ubiquinone biosynthesis. Its function is as follows. Catalyzes the decarboxylation of 3-octaprenyl-4-hydroxy benzoate to 2-octaprenylphenol, an intermediate step in ubiquinone biosynthesis. The sequence is that of 3-octaprenyl-4-hydroxybenzoate carboxy-lyase from Erwinia tasmaniensis (strain DSM 17950 / CFBP 7177 / CIP 109463 / NCPPB 4357 / Et1/99).